The sequence spans 121 residues: Mu-hexatoxin-Mg1a (121 aa).

The N-terminal stretch at 1 to 20 (MMTLSPFLLLLIAAVVIGNA) is a signal peptide. Positions 21 to 80 (SEGEVKNEFEERLKDEFKDPSRSEVAEVILLRELEVLEETLFGKEMTSDTEENRNSREKR) are excised as a propeptide. 3 cysteine pairs are disulfide-bonded: C81/C95, C88/C102, and C94/C116. Lysine amide is present on K120.

Belongs to the neurotoxin 14 (magi-1) family. 09 (magi-1) subfamily. As to expression, expressed by the venom gland.

It is found in the secreted. In terms of biological role, insecticidal neurotoxin. Shows competition for site 3 of insect voltage-gated sodium channels (Nav). Induces flaccid paralysis when injected into lepidopteran larvae. Is not toxic to mice when injected intracranially at 20 pmol/g. The protein is Mu-hexatoxin-Mg1a of Macrothele gigas (Japanese funnel web spider).